We begin with the raw amino-acid sequence, 251 residues long: Probable transcriptional regulatory protein SYO3AOP1_0685 (251 aa).

It belongs to the TACO1 family.

The protein resides in the cytoplasm. The polypeptide is Probable transcriptional regulatory protein SYO3AOP1_0685 (Sulfurihydrogenibium sp. (strain YO3AOP1)).